Here is a 285-residue protein sequence, read N- to C-terminus: MMASMAALLQRLLVVVNQVDPGAPGFWREFLVGMLKPVAATAVVAMAVALSFTQRLGLEGEMLYAMARAFLQLSVIGFVLQFIFTQKSAAWILLAYLFMVTVAGYTAGQRARHVPRGKHIAAVSILAGTSVTMALLVALRVFPFTPRYIIPVAGMMVGNAMTVTGVTMKKLREDVGMQRGVVETALALGATPRQATARQVRRSLVIALSPVIDNAKTVGLIALPGAMTGLIMGGASPLEAIQLQIVVMNMLMGASTVSSILSTYLCWPAFFTGAFQLNDAVFAAD.

The next 7 helical transmembrane spans lie at 30 to 50, 64 to 84, 88 to 108, 119 to 139, 148 to 168, 203 to 225, and 240 to 262; these read FLVG…AVAL, YAMA…QFIF, SAAW…YTAG, HIAA…LVAL, YIIP…GVTM, SLVI…ALPG, and AIQL…SILS.

This sequence belongs to the UPF0014 family. Interacts with STAR2. In terms of tissue distribution, expressed in roots.

Its subcellular location is the membrane. Associates with STAR2 to form a functional transmembrane ABC transporter required for detoxification of aluminum (Al) in roots. Can specifically transport UDP-glucose. The polypeptide is UPF0014 membrane protein STAR2 (Oryza sativa subsp. japonica (Rice)).